The chain runs to 237 residues: tRNA (guanine-N(7)-)-methyltransferase (237 aa).

S-adenosyl-L-methionine is bound by residues Glu-68, Glu-93, Asp-120, and Asp-143. Residue Asp-143 is part of the active site. Substrate is bound by residues Lys-147, Asp-179, and Thr-216–Glu-219.

The protein belongs to the class I-like SAM-binding methyltransferase superfamily. TrmB family.

The enzyme catalyses guanosine(46) in tRNA + S-adenosyl-L-methionine = N(7)-methylguanosine(46) in tRNA + S-adenosyl-L-homocysteine. Its pathway is tRNA modification; N(7)-methylguanine-tRNA biosynthesis. Functionally, catalyzes the formation of N(7)-methylguanine at position 46 (m7G46) in tRNA. In Shewanella pealeana (strain ATCC 700345 / ANG-SQ1), this protein is tRNA (guanine-N(7)-)-methyltransferase.